Here is a 327-residue protein sequence, read N- to C-terminus: MQFIDQANIILKAGKGGNGIVSFRREKFVPAGGPSGGNGGRGGSVILMADNNLQTLLDFKFKREIIAEDGCKGGPNKRSGASGQDTILKVPCGTEIRDIKTGIILGDLTKDKQSLTIAIGGRGGHGNAYYLSNQNRAPESFTEGKDGEIWEVQLELKLLAEVGIIGLPNAGKSTLISVVSSARPKIANYPFTTLIPNLGVVRKMDGNGCLFADIPGLISGAADGVGLGHDFLRHIQRTKILVHLIDAIAENPLHDFEIIEQELKKYGKGLLDKERIIVLNKMELVDDDYLQIITKKLEDLSKKKVLVISSSLKKGLSSLLSEVWKRI.

In terms of domain architecture, Obg spans 1 to 159; that stretch reads MQFIDQANII…WEVQLELKLL (159 aa). The 168-residue stretch at 160 to 327 folds into the OBG-type G domain; that stretch reads AEVGIIGLPN…SLLSEVWKRI (168 aa). ATP contacts are provided by residues 166-173, 191-195, 213-216, 280-283, and 309-311; these read GLPNAGKS, FTTLI, DIPG, NKME, and SSS. Mg(2+)-binding residues include Ser173 and Thr193.

The protein belongs to the TRAFAC class OBG-HflX-like GTPase superfamily. OBG GTPase family. In terms of assembly, monomer. Mg(2+) is required as a cofactor.

It is found in the cytoplasm. In terms of biological role, an essential GTPase which binds GTP, GDP and possibly (p)ppGpp with moderate affinity, with high nucleotide exchange rates and a fairly low GTP hydrolysis rate. Plays a role in control of the cell cycle, stress response, ribosome biogenesis and in those bacteria that undergo differentiation, in morphogenesis control. The polypeptide is GTPase Obg (Prochlorococcus marinus (strain MIT 9301)).